The following is a 258-amino-acid chain: Ubiquinone/menaquinone biosynthesis C-methyltransferase UbiE (258 aa).

Residues 1–21 (MPESRTSADGGMETSYGFREV) are disordered. S-adenosyl-L-methionine is bound by residues T81, D102, and 130–131 (NA).

It belongs to the class I-like SAM-binding methyltransferase superfamily. MenG/UbiE family.

It carries out the reaction a 2-demethylmenaquinol + S-adenosyl-L-methionine = a menaquinol + S-adenosyl-L-homocysteine + H(+). The enzyme catalyses a 2-methoxy-6-(all-trans-polyprenyl)benzene-1,4-diol + S-adenosyl-L-methionine = a 5-methoxy-2-methyl-3-(all-trans-polyprenyl)benzene-1,4-diol + S-adenosyl-L-homocysteine + H(+). Its pathway is quinol/quinone metabolism; menaquinone biosynthesis; menaquinol from 1,4-dihydroxy-2-naphthoate: step 2/2. It functions in the pathway cofactor biosynthesis; ubiquinone biosynthesis. Functionally, methyltransferase required for the conversion of demethylmenaquinol (DMKH2) to menaquinol (MKH2) and the conversion of 2-polyprenyl-6-methoxy-1,4-benzoquinol (DDMQH2) to 2-polyprenyl-3-methyl-6-methoxy-1,4-benzoquinol (DMQH2). The polypeptide is Ubiquinone/menaquinone biosynthesis C-methyltransferase UbiE (Rhizobium leguminosarum bv. trifolii (strain WSM2304)).